Consider the following 571-residue polypeptide: Cyclic di-GMP phosphodiesterase TpdA (571 aa).

Helical transmembrane passes span 155 to 175, 321 to 341, and 395 to 415; these read IAWVLLVTTAIFFSVCYYAIN, VYYISGPLKSIILLSLFFLVI, and TLISNGLLLIHTILVIRAIYA. One can recognise an EAL domain in the interval 344–571; that stretch reads HRSLQAFITY…HQGYFYPLHF (228 aa).

It is found in the cell inner membrane. It catalyses the reaction 3',3'-c-di-GMP + H2O = 5'-phosphoguanylyl(3'-&gt;5')guanosine + H(+). Functionally, cyclic di-GMP phosphodiesterase that plays an important role in modulating the global c-di-GMP pool. Its ability to alter the c-di-GMP pool has an effect on swimming motility, swarming motility and biofilm formation, multicellular behaviors that are important for the survival and dissemination of this environmental pathogen. Exhibits a dual function, namely, c-di-GMP degradation and modulation of its own expression. In Vibrio parahaemolyticus serotype O3:K6 (strain RIMD 2210633), this protein is Cyclic di-GMP phosphodiesterase TpdA.